The following is a 144-amino-acid chain: Thyrostimulin alpha-2 subunit (144 aa).

Residues 1–41 form the signal peptide; sequence MGRRDSGRAVAQRYRGVTRGVTVIACLMVVCACVGLCDATG. 4 disulfides stabilise this stretch: cysteine 52/cysteine 107, cysteine 66/cysteine 121, cysteine 76/cysteine 136, and cysteine 80/cysteine 138.

It belongs to the glycoprotein hormones subunit alpha family. As to quaternary structure, heterodimer with GPHB5; non-covalently-linked. Expressed by the venom duct.

The protein localises to the secreted. This Conus victoriae (Queen Victoria cone) protein is Thyrostimulin alpha-2 subunit.